Reading from the N-terminus, the 406-residue chain is UPF0754 membrane protein SYNPCC7002_A1087 (406 aa).

The helical transmembrane segment at 384–404 threads the bilayer; it reads IVNLGGVLGFLVGVAQSVILL.

Belongs to the UPF0754 family.

It localises to the cell inner membrane. The sequence is that of UPF0754 membrane protein SYNPCC7002_A1087 from Picosynechococcus sp. (strain ATCC 27264 / PCC 7002 / PR-6) (Agmenellum quadruplicatum).